The primary structure comprises 814 residues: Rho GTPase-activating protein 44 (814 aa).

The 236-residue stretch at 14 to 249 (QTVGRAEKTE…IKAQQEAWVE (236 aa)) folds into the BAR domain. A Rho-GAP domain is found at 255–445 (KPLEEHLMIS…PIIQHADWFF (191 aa)). 3 disordered regions span residues 467 to 493 (ANYS…RPLS), 531 to 768 (SAGR…SMST), and 784 to 814 (STLR…STAL). The span at 479–489 (PADRRQPEQAR) shows a compositional bias: basic and acidic residues. A Phosphoserine modification is found at Ser-493. 6 stretches are compositionally biased toward low complexity: residues 531–541 (SAGRKAACAPP), 567–581 (SPAT…SGAS), 598–612 (SPGS…SIQG), 622–637 (PQPA…DQSP), 684–704 (SPYG…LSPA), and 741–752 (SVSLSASSPQST). The interval 727–814 (KPRQRPTLPP…SEEESESTAL (88 aa)) is interaction with BST2. Over residues 790–805 (PLEHARRHSVTDKRDS) the composition is skewed to basic and acidic residues. A Phosphoserine modification is found at Ser-805. The PDZ-binding signature appears at 811 to 814 (STAL).

Interacts with BST2 (via cytoplasmic domain). Interacts (probably via PDZ-binding motif) with SHANK3 (via PDZ domain); the interaction takes place in dendritic spines and promotes GRIA1 exocytosis. As to expression, expressed in brain, detected at high levels in hippocampal CA1 (at protein level).

Its subcellular location is the cell projection. It is found in the dendritic spine. The protein localises to the recycling endosome. It localises to the presynapse. The protein resides in the dendrite. Its function is as follows. GTPase-activating protein (GAP) that stimulates the GTPase activity of Rho-type GTPases. Thereby, controls Rho-type GTPases cycling between their active GTP-bound and inactive GDP-bound states. Acts as a GAP at least for CDC42 and RAC1. In neurons, is involved in dendritic spine formation and synaptic plasticity in a specific RAC1-GAP activity. Limits the initiation of exploratory dendritic filopodia. Recruited to actin-patches that seed filopodia, binds specifically to plasma membrane sections that are deformed inward by acto-myosin mediated contractile forces. Acts through GAP activity on RAC1 to reduce actin polymerization necessary for filopodia formation. In association with SHANK3, promotes GRIA1 exocytosis from recycling endosomes and spine morphological changes associated to long-term potentiation. The sequence is that of Rho GTPase-activating protein 44 from Rattus norvegicus (Rat).